The chain runs to 569 residues: MPPTEESKPVDPAQEKQAAEALASLKEAQQPAADESGSEDEGADGTAQEAGSGSTKKKNKKKSKKKNKDKSASTESSAEVGLTEALAQADPKSALSGLTPKQIQEFIDLNPALANELLAASGSSGTTDVMEAFKKLKIQDIITGLASSGKNRKDMASYKFWATQPVPQFDEKPAIFEEGPLKIQKVEDIPDEPIPLNLAPFRWVTMDLTDEKQMQEVEKLLYGHFVEDDEAMFRFKYSTSILKWSLMSPGWRKEWHVGIRSGDTLCAFIAAVPTEIRVRDKVIQGSEVNFLCIHKKLRGKRLAPVLIKEITRRINREGIWQAIYTGGIVLPRPVSTCRYYHRALNWQKLYEVGFSPCPSNSKPAFQVRKYALPEQTSTKGLRELQVKDLDAVHSLLERYLKRFDLTPVFNREETEHWLLHKKDSYAEQVIYSYVVEDASGKITDFFSFYLLESTVIRHPKHNSIRAAYMFYYATETAFTEPFDKGALTKRLNDLMADALILAKRHNFDVFNALSLMDNALFLEKQKFGPGDGQLHYYLFNYKANPIHGGVDKKNRLDEDNLSGVGFVMV.

The span at 1–18 shows a compositional bias: basic and acidic residues; sequence MPPTEESKPVDPAQEKQA. The disordered stretch occupies residues 1 to 82; that stretch reads MPPTEESKPV…STESSAEVGL (82 aa). Over residues 55–68 the composition is skewed to basic residues; the sequence is TKKKNKKKSKKKNK. Residues 158–161, 291–293, and 299–303 contribute to the tetradecanoyl-CoA site; these read YKFW, LCI, and GKRLA. The active-site Proton acceptor; via carboxylate is the valine 569.

The protein belongs to the NMT family. In terms of assembly, monomer.

Its subcellular location is the cytoplasm. It carries out the reaction N-terminal glycyl-[protein] + tetradecanoyl-CoA = N-tetradecanoylglycyl-[protein] + CoA + H(+). In terms of biological role, adds a myristoyl group to the N-terminal glycine residue of certain cellular proteins. This chain is Glycylpeptide N-tetradecanoyltransferase (gtt-1), found in Neurospora crassa (strain ATCC 24698 / 74-OR23-1A / CBS 708.71 / DSM 1257 / FGSC 987).